The primary structure comprises 273 residues: WIMGHMVNAIAQIDEFVNLGANSIETDVSFDSSANPEYTYHGVPCDCGRTCTKWEHFNEFLKGLRKATTPGDSKYHEKLVLVVFDLKTGSLYDNQASDAGKKLAKSLLQNYWNNGNNGGRAYIVLSIPNLAHYKLITGFKEALTSEGHPELMDKVGYDFSGNDDIGDVANAYKKAGVTGHVWQSDGITNCLLRGLDRVRKAVANRDSSNGYINKVYYWTVDKRQSTRDALDAGVDGIMTNYPDVIADVLNESAYKAKFRIASYDDNPWETFKN.

Residue histidine 5 is part of the active site. Glutamate 25 and aspartate 27 together coordinate Mg(2+). Catalysis depends on histidine 41, which acts as the Nucleophile. 2 disulfide bridges follow: cysteine 45–cysteine 51 and cysteine 47–cysteine 190. Residue aspartate 85 participates in Mg(2+) binding. Asparagine 250 carries N-linked (GlcNAc...) asparagine glycosylation.

The protein belongs to the arthropod phospholipase D family. Class II subfamily. Requires Mg(2+) as cofactor. Expressed by the venom gland.

It is found in the secreted. It catalyses the reaction an N-(acyl)-sphingosylphosphocholine = an N-(acyl)-sphingosyl-1,3-cyclic phosphate + choline. The catalysed reaction is an N-(acyl)-sphingosylphosphoethanolamine = an N-(acyl)-sphingosyl-1,3-cyclic phosphate + ethanolamine. The enzyme catalyses a 1-acyl-sn-glycero-3-phosphocholine = a 1-acyl-sn-glycero-2,3-cyclic phosphate + choline. It carries out the reaction a 1-acyl-sn-glycero-3-phosphoethanolamine = a 1-acyl-sn-glycero-2,3-cyclic phosphate + ethanolamine. Its function is as follows. Dermonecrotic toxins cleave the phosphodiester linkage between the phosphate and headgroup of certain phospholipids (sphingolipid and lysolipid substrates), forming an alcohol (often choline) and a cyclic phosphate. This toxin acts on sphingomyelin (SM). It may also act on ceramide phosphoethanolamine (CPE), lysophosphatidylcholine (LPC) and lysophosphatidylethanolamine (LPE), but not on lysophosphatidylserine (LPS), and lysophosphatidylglycerol (LPG). It acts by transphosphatidylation, releasing exclusively cyclic phosphate products as second products. Induces dermonecrosis, hemolysis, increased vascular permeability, edema, inflammatory response, and platelet aggregation. This Loxosceles apachea (Apache recluse spider) protein is Dermonecrotic toxin LapSicTox-alphaIB1c.